The primary structure comprises 70 residues: Conotoxin Cl6.13 (70 aa).

Residues 1–21 form the signal peptide; that stretch reads MKFPLLFISLALAAFLTRVQD. Positions 22–33 are excised as a propeptide; it reads ADSSVISKEKSV. Intrachain disulfides connect Cys41–Cys58, Cys48–Cys63, and Cys57–Cys68.

Expressed by the venom duct.

It is found in the secreted. The sequence is that of Conotoxin Cl6.13 from Californiconus californicus (California cone).